The sequence spans 89 residues: Small ribosomal subunit protein uS15 (89 aa).

Belongs to the universal ribosomal protein uS15 family. As to quaternary structure, part of the 30S ribosomal subunit. Forms a bridge to the 50S subunit in the 70S ribosome, contacting the 23S rRNA.

Its function is as follows. One of the primary rRNA binding proteins, it binds directly to 16S rRNA where it helps nucleate assembly of the platform of the 30S subunit by binding and bridging several RNA helices of the 16S rRNA. In terms of biological role, forms an intersubunit bridge (bridge B4) with the 23S rRNA of the 50S subunit in the ribosome. This is Small ribosomal subunit protein uS15 from Bacteroides fragilis (strain ATCC 25285 / DSM 2151 / CCUG 4856 / JCM 11019 / LMG 10263 / NCTC 9343 / Onslow / VPI 2553 / EN-2).